We begin with the raw amino-acid sequence, 61 residues long: uncharacterized protein (61 aa).

Positions 1–40 are disordered; sequence MRRGGEPQCDGREFRIASSPAREREDDNETAPPQTSAAQE. A compositionally biased stretch (basic and acidic residues) spans 9-25; it reads CDGREFRIASSPARERE.

This is an uncharacterized protein from Caenorhabditis elegans.